A 189-amino-acid polypeptide reads, in one-letter code: Thioredoxin-like protein CITRX, chloroplastic (189 aa).

The N-terminal 56 residues, 1–56, are a transit peptide targeting the chloroplast; that stretch reads MAMAAAASLLPASAAPTLPGRAFRPPRNSTPTASLSCDGGSRCRGVGLGVILGGCR. The Thioredoxin domain occupies 72-189; the sequence is GSGKYIAPDY…MIRNIIDNEL (118 aa). Active-site nucleophile residues include Cys-112 and Cys-115. A disulfide bridge connects residues Cys-112 and Cys-115.

It belongs to the thioredoxin family. Plant CITRX-type subfamily.

The protein resides in the plastid. It is found in the chloroplast. Probable thiol-disulfide oxidoreductase that may play a role in proper chloroplast development. The protein is Thioredoxin-like protein CITRX, chloroplastic of Oryza sativa subsp. japonica (Rice).